The primary structure comprises 558 residues: Membrane protein insertase YidC (558 aa).

6 consecutive transmembrane segments (helical) span residues 5 to 25, 332 to 352, 355 to 375, 429 to 449, 474 to 494, and 520 to 540; these read IINL…WQYF, AIDF…MNFF, YVGN…LLMF, LPIL…YVTI, LFGL…WPIL, and FMPL…LIYW.

Belongs to the OXA1/ALB3/YidC family. Type 1 subfamily. In terms of assembly, interacts with the Sec translocase complex via SecD. Specifically interacts with transmembrane segments of nascent integral membrane proteins during membrane integration.

Its subcellular location is the cell inner membrane. In terms of biological role, required for the insertion and/or proper folding and/or complex formation of integral membrane proteins into the membrane. Involved in integration of membrane proteins that insert both dependently and independently of the Sec translocase complex, as well as at least some lipoproteins. Aids folding of multispanning membrane proteins. In Rickettsia typhi (strain ATCC VR-144 / Wilmington), this protein is Membrane protein insertase YidC.